The chain runs to 340 residues: MISELVKSFQPYRVVEGNYRIRLDKNENPYDLPGEVKEEIFEELREVSFNRYPHITSMPAREAIADFYGVSPDNVAVGNGSDELLSYLVRLFEGNHIVITPPTFGMYSFYAKLNGVPVVEVPLREDFTLDGEAVAEKAKNARVVFIASPNNPTGNLQPEEEIIRVLETRRPVVLDEAYAEFVGKSLWRLIEEYPNLVVLRTFSKAFGMAGIRAGYMLAGEEIVDALYRIKSPFSVGIMTMTAIRVALRHADLMEKTVRKIVEERERMRRKLGELAYPSDANFLLVRLNAYEELLKRGIVVRKLSGRLEGHIRVTVGRRWENDAFLEAVEEIAGGESVGGL.

K204 is modified (N6-(pyridoxal phosphate)lysine).

The protein belongs to the class-II pyridoxal-phosphate-dependent aminotransferase family. Histidinol-phosphate aminotransferase subfamily. Pyridoxal 5'-phosphate is required as a cofactor.

It catalyses the reaction L-histidinol phosphate + 2-oxoglutarate = 3-(imidazol-4-yl)-2-oxopropyl phosphate + L-glutamate. Its pathway is amino-acid biosynthesis; L-histidine biosynthesis; L-histidine from 5-phospho-alpha-D-ribose 1-diphosphate: step 7/9. This chain is Histidinol-phosphate aminotransferase, found in Thermococcus gammatolerans (strain DSM 15229 / JCM 11827 / EJ3).